The following is a 272-amino-acid chain: Phosphatidylglycerol--prolipoprotein diacylglyceryl transferase (272 aa).

Helical transmembrane passes span 15-35 (LGPL…LVLF), 53-73 (AFAV…WHVV), 94-114 (GLGF…IAKI), and 117-137 (VPPF…LCFA). Arg-138 provides a ligand contact to a 1,2-diacyl-sn-glycero-3-phospho-(1'-sn-glycerol). Transmembrane regions (helical) follow at residues 174–194 (FHPI…ILLV), 199–219 (VFVK…VLYG), and 237–257 (FGLD…VLIA).

This sequence belongs to the Lgt family.

The protein localises to the cell membrane. It carries out the reaction L-cysteinyl-[prolipoprotein] + a 1,2-diacyl-sn-glycero-3-phospho-(1'-sn-glycerol) = an S-1,2-diacyl-sn-glyceryl-L-cysteinyl-[prolipoprotein] + sn-glycerol 1-phosphate + H(+). It functions in the pathway protein modification; lipoprotein biosynthesis (diacylglyceryl transfer). Its function is as follows. Catalyzes the transfer of the diacylglyceryl group from phosphatidylglycerol to the sulfhydryl group of the N-terminal cysteine of a prolipoprotein, the first step in the formation of mature lipoproteins. The chain is Phosphatidylglycerol--prolipoprotein diacylglyceryl transferase from Tropheryma whipplei (strain TW08/27) (Whipple's bacillus).